The primary structure comprises 347 residues: 3-keto-steroid reductase ERG27 (347 aa).

Residues Leu15, Thr38, and Arg44 each contribute to the NADP(+) site. Active-site proton donor residues include Ser179 and Tyr202. Residues Tyr202, Lys206, and Ser237 each contribute to the NADP(+) site. Lys206 acts as the Lowers pKa of active site Tyr in catalysis. Thr345 is subject to Phosphothreonine.

The protein belongs to the short-chain dehydrogenases/reductases (SDR) family. ERG27 subfamily. Heterotetramer of ERG25, ERG26, ERG27 and ERG28. ERG28 acts as a scaffold to tether ERG27 and other 4,4-demethylation-related enzymes, forming a demethylation enzyme complex, in the endoplasmic reticulum. Interacts with ERG25 and ERG28. Also interacts with ERG7, but only in lipid particles.

The protein localises to the endoplasmic reticulum membrane. The protein resides in the lipid droplet. The enzyme catalyses 3-dehydro-4alpha-methylzymosterol + NADPH + H(+) = 4alpha-methylzymosterol + NADP(+). Its pathway is steroid biosynthesis; zymosterol biosynthesis; zymosterol from lanosterol: step 5/6. In terms of biological role, 3-keto-steroid reductase; part of the third module of ergosterol biosynthesis pathway that includes the late steps of the pathway. ERG27 is a catalytic component of the C-4 demethylation complex that catalyze the reduction of the keto group on the C-3. The third module or late pathway involves the ergosterol synthesis itself through consecutive reactions that mainly occur in the endoplasmic reticulum (ER) membrane. Firstly, the squalene synthase ERG9 catalyzes the condensation of 2 farnesyl pyrophosphate moieties to form squalene, which is the precursor of all steroids. Squalene synthase is crucial for balancing the incorporation of farnesyl diphosphate (FPP) into sterol and nonsterol isoprene synthesis. Secondly, the squalene epoxidase ERG1 catalyzes the stereospecific oxidation of squalene to (S)-2,3-epoxysqualene, which is considered to be a rate-limiting enzyme in steroid biosynthesis. Then, the lanosterol synthase ERG7 catalyzes the cyclization of (S)-2,3 oxidosqualene to lanosterol, a reaction that forms the sterol core. In the next steps, lanosterol is transformed to zymosterol through a complex process involving various demethylation, reduction and desaturation reactions. The lanosterol 14-alpha-demethylase ERG11 (also known as CYP51) catalyzes C14-demethylation of lanosterol to produce 4,4'-dimethyl cholesta-8,14,24-triene-3-beta-ol, which is critical for ergosterol biosynthesis. The C-14 reductase ERG24 reduces the C14=C15 double bond of 4,4-dimethyl-cholesta-8,14,24-trienol to produce 4,4-dimethyl-cholesta-8,24-dienol. 4,4-dimethyl-cholesta-8,24-dienol is substrate of the C-4 demethylation complex ERG25-ERG26-ERG27 in which ERG25 catalyzes the three-step monooxygenation required for the demethylation of 4,4-dimethyl and 4alpha-methylsterols, ERG26 catalyzes the oxidative decarboxylation that results in a reduction of the 3-beta-hydroxy group at the C-3 carbon to an oxo group, and ERG27 is responsible for the reduction of the keto group on the C-3. ERG28 has a role as a scaffold to help anchor ERG25, ERG26 and ERG27 to the endoplasmic reticulum and ERG29 regulates the activity of the iron-containing C4-methylsterol oxidase ERG25. Then, the sterol 24-C-methyltransferase ERG6 catalyzes the methyl transfer from S-adenosyl-methionine to the C-24 of zymosterol to form fecosterol. The C-8 sterol isomerase ERG2 catalyzes the reaction which results in unsaturation at C-7 in the B ring of sterols and thus converts fecosterol to episterol. The sterol-C5-desaturase ERG3 then catalyzes the introduction of a C-5 double bond in the B ring to produce 5-dehydroepisterol. The C-22 sterol desaturase ERG5 further converts 5-dehydroepisterol into ergosta-5,7,22,24(28)-tetraen-3beta-ol by forming the C-22(23) double bond in the sterol side chain. Finally, ergosta-5,7,22,24(28)-tetraen-3beta-ol is substrate of the C-24(28) sterol reductase ERG4 to produce ergosterol. Functionally, facilitates the association of ERG7 with lipid particles preventing its digestion in the endoplasmic reticulum and the lipid particles. In Saccharomyces cerevisiae (strain ATCC 204508 / S288c) (Baker's yeast), this protein is 3-keto-steroid reductase ERG27.